We begin with the raw amino-acid sequence, 434 residues long: MSATAVEPAAAIETVTARRIIDSRGNPTVEVDVVLEDGSLGRAAVPSGASTGAREAVELRDEDPTRWHGKGVDRAVAHVNGEIAASVRGRDAADQAGLDAALIALDGTAAKSRLGANALLGVSLAAAKAAAAARRQPLYRYLGGADAHLLPLPMMNIVNGGAHADNPLDFQEFMIVPVGADTFAEAVRMGSEVFHTLRRDLLAAGHSTGVGDEGGFAPALRTAEEALDFVVAAIERTGYRAGPDIGLVMDPASSEFFRDGGYDYAGEGVRRSPAEHADHLAGLIDAYPVVSIEDPMAEDDLDGWRELTDRVGDRCQLTGDDVFCTDEALVREGIRTGVGNSVLVKVNQIGTLTEALATVATAHEAGWTVVMSHRSGETEDTTIADLAVATGCGQIKTGSLSRSDRTAKYNRLIRIEEELGASARFAGRSALRRV.

Gln-171 is a binding site for (2R)-2-phosphoglycerate. Glu-213 serves as the catalytic Proton donor. 3 residues coordinate Mg(2+): Asp-250, Glu-293, and Asp-320. Residues Lys-345, Arg-374, Ser-375, and Lys-396 each contribute to the (2R)-2-phosphoglycerate site. Residue Lys-345 is the Proton acceptor of the active site.

The protein belongs to the enolase family. It depends on Mg(2+) as a cofactor.

It localises to the cytoplasm. The protein resides in the secreted. The protein localises to the cell surface. It carries out the reaction (2R)-2-phosphoglycerate = phosphoenolpyruvate + H2O. The protein operates within carbohydrate degradation; glycolysis; pyruvate from D-glyceraldehyde 3-phosphate: step 4/5. Catalyzes the reversible conversion of 2-phosphoglycerate (2-PG) into phosphoenolpyruvate (PEP). It is essential for the degradation of carbohydrates via glycolysis. The polypeptide is Enolase 2 (Streptomyces coelicolor (strain ATCC BAA-471 / A3(2) / M145)).